Consider the following 541-residue polypeptide: Putative transferase YhbX (541 aa).

Residues 1-60 (MTVFNKFARSFKSHWLLYLSVIVFGITNLVASSGAHMVQRLLFFVLTILVVKRISSLPLR) lie on the Periplasmic side of the membrane. The helical transmembrane segment at 61-81 (LLVAAPFVLLTAADMSISLYS) threads the bilayer. At 82-110 (WCTFGTTFNDGFAISVLQSDPDEVAKMLG) the chain is on the cytoplasmic side. The helical transmembrane segment at 111–131 (MYSPYLCAFAFLSLLFLAVII) threads the bilayer. At 132-141 (KYDVSLPTKK) the chain is on the periplasmic side. A helical transmembrane segment spans residues 142–162 (VTGILLLIVISGSLFSACQFA). At 163–264 (YKDAKNKNAF…RKQIKLFNQA (102 aa)) the chain is on the cytoplasmic side. Residues 265–285 (ISGAPYTALSVPLSLTADSVL) form a helical membrane-spanning segment. Topologically, residues 286 to 541 (SHDIHNYPDN…QGNPTPEGQG (256 aa)) are periplasmic.

This sequence belongs to the phosphoethanolamine transferase family.

It is found in the cell inner membrane. There are several lipid A forms in this strain, including a phosphoethanolamine (1-O-P-pEtN) form; overexpression of this gene does not lead to higher levels of the 1-O-P-pEtN form of lipid A. This chain is Putative transferase YhbX (yhbX), found in Escherichia coli O157:H7.